Here is a 315-residue protein sequence, read N- to C-terminus: Hydrogenase-4 component C (315 aa).

Over 1-10 (MRQTLCDGYL) the chain is Periplasmic. The chain crosses the membrane as a helical span at residues 11 to 31 (VIFALAQAVILLMLTPLFTGI). The Cytoplasmic portion of the chain corresponds to 32 to 73 (SRQIRARMHSRRGPGIWQDYRDIHKLFKRQEVAPTSSGLMFR). Residues 74–94 (LMPWVLISSMLVLAMALPLFI) form a helical membrane-spanning segment. Over 95-98 (TVSP) the chain is Periplasmic. A helical membrane pass occupies residues 99–119 (FAGGGDLITLIYLLALFRFFF). Over 120-140 (ALSGLDTGSPFAGVGASRELT) the chain is Cytoplasmic. The chain crosses the membrane as a helical span at residues 141–161 (LGILVEPMLILSLLVLALIAG). The Periplasmic segment spans residues 162 to 181 (STHIEMISNTLAMGWNSPLT). The chain crosses the membrane as a helical span at residues 182–202 (TVLALLACGFACFIEMGKIPF). The Cytoplasmic segment spans residues 203-228 (DVAEAEQELQEGPLTEYSGAGLALAK). Residues 229-249 (WGLGLKQVVMASLFVALFLPF) form a helical membrane-spanning segment. The Periplasmic segment spans residues 250–256 (GRAQELS). Residues 257–277 (LACLLTSLVVTLLKVLLIFVL) form a helical membrane-spanning segment. The Cytoplasmic segment spans residues 278-289 (ASIAENTLARGR). A helical membrane pass occupies residues 290-310 (FLLIHHVTWLGFSLAALAWVF). Topologically, residues 311 to 315 (WLTGL) are periplasmic.

It belongs to the complex I subunit 1 family.

It is found in the cell inner membrane. In terms of biological role, possible component of hydrogenase 4. This chain is Hydrogenase-4 component C, found in Escherichia coli (strain K12).